The sequence spans 187 residues: MIIIVTGTPGVGKTIASKKLSEALNLNYLSLSQFVIENKLYTEYDELRQSYIIDEDKVKEELEKIISTSHLVIETIYPSLVSTADLVVVLRKNPFSLYNELKGRGWADIKVAENVEAEILGVISQEAREAFKDKVCEVDTTEMSTEQILNKILNKQCDGPIEWLVDTKVQRFLEELDKIISSYENDI.

Positions 10, 12, 13, 14, and 15 each coordinate ATP. Residues 30-53 (SLSQFVIENKLYTEYDELRQSYII) form an NMP region. An LID region spans residues 103 to 113 (GRGWADIKVAE). An ATP-binding site is contributed by arginine 104.

This sequence belongs to the adenylate kinase family. AK6 subfamily. As to quaternary structure, interacts with uS11. Not a structural component of 40S pre-ribosomes, but transiently interacts with them by binding to uS11.

The catalysed reaction is AMP + ATP = 2 ADP. It carries out the reaction ATP + H2O = ADP + phosphate + H(+). Broad-specificity nucleoside monophosphate (NMP) kinase that catalyzes the reversible transfer of the terminal phosphate group between nucleoside triphosphates and monophosphates. Also has ATPase activity. Involved in the late maturation steps of the 30S ribosomal particles, specifically 16S rRNA maturation. While NMP activity is not required for ribosome maturation, ATPase activity is. Associates transiently with small ribosomal subunit protein uS11. ATP hydrolysis breaks the interaction with uS11. May temporarily remove uS11 from the ribosome to enable a conformational change of the ribosomal RNA that is needed for the final maturation step of the small ribosomal subunit. This chain is Putative adenylate kinase, found in Saccharolobus islandicus (strain L.S.2.15 / Lassen #1) (Sulfolobus islandicus).